Reading from the N-terminus, the 189-residue chain is Parkinson disease protein 7 homolog (189 aa).

S-palmitoyl cysteine attachment occurs at residues cysteine 46 and cysteine 53. Tyrosine 67 carries the phosphotyrosine modification. The S-palmitoyl cysteine moiety is linked to residue cysteine 106. Cysteine 106 (nucleophile) is an active-site residue. A Cysteine sulfinic acid (-SO2H) modification is found at cysteine 106. Cysteine sulfinic acid (-SO2H); alternate is present on cysteine 106. Cysteine 106 is lipidated: S-palmitoyl cysteine; alternate. Histidine 126 is an active-site residue. Lysine 130 participates in a covalent cross-link: Glycyl lysine isopeptide (Lys-Gly) (interchain with G-Cter in SUMO). Lysine 148 is modified (N6-acetyllysine). At lysine 182 the chain carries N6-succinyllysine.

It belongs to the peptidase C56 family. In terms of assembly, homodimer. Deglycase activity does not require glutathione as a cofactor, however, glycated glutathione constitutes a PARK7 substrate. is required as a cofactor. Sumoylated on Lys-130 by pias2 or pias4; which is essential for cell-growth promoting activity and transforming activity. Post-translationally, undergoes cleavage of a C-terminal peptide and subsequent activation of protease activity in response to oxidative stress. As to expression, larval brain and gut from 96 hours post-fertilization (hpf). Ubiquitous in adult; most abundant in brain, eye, heart and muscle. Within brain, neuronal expression is widespread, particularly in the cerebellum, medullary reticular formation and diencephalon. Expressed in major forebrain and diencephalic dopaminergic cell groups.

The protein resides in the cell membrane. It localises to the cytoplasm. The protein localises to the nucleus. It is found in the membrane raft. Its subcellular location is the mitochondrion. The protein resides in the endoplasmic reticulum. It carries out the reaction N(omega)-(1-hydroxy-2-oxopropyl)-L-arginyl-[protein] + H2O = lactate + L-arginyl-[protein] + H(+). The enzyme catalyses N(6)-(1-hydroxy-2-oxopropyl)-L-lysyl-[protein] + H2O = lactate + L-lysyl-[protein] + H(+). The catalysed reaction is S-(1-hydroxy-2-oxopropyl)-L-cysteinyl-[protein] + H2O = lactate + L-cysteinyl-[protein] + H(+). It catalyses the reaction N(omega)-(1-hydroxy-2-oxoethyl)-L-arginyl-[protein] + H2O = L-arginyl-[protein] + glycolate + H(+). It carries out the reaction N(6)-(1-hydroxy-2-oxoethyl)-L-lysyl-[protein] + H2O = glycolate + L-lysyl-[protein] + H(+). The enzyme catalyses S-(1-hydroxy-2-oxoethyl)-L-cysteinyl-[protein] + H2O = glycolate + L-cysteinyl-[protein] + H(+). The catalysed reaction is N(2)-(1-hydroxy-2-oxopropyl)-dGTP + H2O = lactate + dGTP + H(+). It catalyses the reaction N(2)-(1-hydroxy-2-oxopropyl)-GTP + H2O = lactate + GTP + H(+). It carries out the reaction N(2)-(1-hydroxy-2-oxopropyl)-GDP + H2O = lactate + GDP + H(+). The enzyme catalyses N(2)-(1-hydroxy-2-oxopropyl)-GMP + H2O = lactate + GMP + H(+). The catalysed reaction is N(2)-(1-hydroxy-2-oxoethyl)-dGTP + H2O = dGTP + glycolate + H(+). It catalyses the reaction N(2)-(1-hydroxy-2-oxoethyl)-GTP + H2O = glycolate + GTP + H(+). It carries out the reaction N(2)-(1-hydroxy-2-oxoethyl)-GDP + H2O = glycolate + GDP + H(+). The enzyme catalyses N(2)-(1-hydroxy-2-oxoethyl)-GMP + H2O = glycolate + GMP + H(+). The catalysed reaction is an N(2)-(1-hydroxy-2-oxopropyl)-guanosine in RNA + H2O = a guanosine in RNA + lactate + H(+). It catalyses the reaction an N(2)-(1-hydroxy-2-oxopropyl)-2'-deoxyguanosine in DNA + H2O = a 2'-deoxyguanosine in DNA + lactate + H(+). It carries out the reaction an N(2)-(1-hydroxy-2-oxoethyl)-guanosine in RNA + H2O = a guanosine in RNA + glycolate + H(+). The enzyme catalyses an N(2)-(1-hydroxy-2-oxoethyl)-2'-deoxyguanosine in DNA + H2O = a 2'-deoxyguanosine in DNA + glycolate + H(+). In terms of biological role, multifunctional protein with controversial molecular function which plays an important role in cell protection against oxidative stress and cell death acting as oxidative stress sensor and redox-sensitive chaperone and protease. It is involved in neuroprotective mechanisms like the stabilization of NFE2L2 and PINK1 proteins, male fertility as a positive regulator of androgen signaling pathway as well as cell growth and transformation through, for instance, the modulation of NF-kappa-B signaling pathway. Has been described as a protein and nucleotide deglycase that catalyzes the deglycation of the Maillard adducts formed between amino groups of proteins or nucleotides and reactive carbonyl groups of glyoxals. But this function is rebuted by other works. As a protein deglycase, repairs methylglyoxal- and glyoxal-glycated proteins, and releases repaired proteins and lactate or glycolate, respectively. Deglycates cysteine, arginine and lysine residues in proteins, and thus reactivates these proteins by reversing glycation by glyoxals. Acts on early glycation intermediates (hemithioacetals and aminocarbinols), preventing the formation of advanced glycation endproducts (AGE) that cause irreversible damage. Also functions as a nucleotide deglycase able to repair glycated guanine in the free nucleotide pool (GTP, GDP, GMP, dGTP) and in DNA and RNA. Is thus involved in a major nucleotide repair system named guanine glycation repair (GG repair), dedicated to reversing methylglyoxal and glyoxal damage via nucleotide sanitization and direct nucleic acid repair. Protects histones from adduction by methylglyoxal, controls the levels of methylglyoxal-derived argininine modifications on chromatin. Displays a very low glyoxalase activity that may reflect its deglycase activity. It is involved in neuroprotective mechanisms as well as cell growth and transformation. Its involvement in protein repair could also explain other unrelated functions. Eliminates hydrogen peroxide and protects cells against hydrogen peroxide-induced cell death. Required for correct mitochondrial morphology and function as well as for autophagy of dysfunctional mitochondria. Regulates astrocyte inflammatory responses, may modulate lipid rafts-dependent endocytosis in astrocytes and neuronal cells. Binds to a number of mRNAs containing multiple copies of GG or CC motifs and partially inhibits their translation but dissociates following oxidative stress. Metal-binding protein able to bind copper as well as toxic mercury ions, enhances the cell protection mechanism against induced metal toxicity. In Danio rerio (Zebrafish), this protein is Parkinson disease protein 7 homolog.